Reading from the N-terminus, the 235-residue chain is Transmembrane protein 215 (235 aa).

2 helical membrane-spanning segments follow: residues 12 to 32 and 40 to 60; these read LVVA…VSGM and IPLL…IALA. The disordered stretch occupies residues 99-146; sequence SDLESGKGSSDELAKKAGLRGKQLPQGPGEVPMASSVTTPTPTEEGEC.

The protein resides in the membrane. The sequence is that of Transmembrane protein 215 (Tmem215) from Mus musculus (Mouse).